The primary structure comprises 234 residues: CKLF-like MARVEL transmembrane domain-containing protein 4 (234 aa).

Positions 1 to 11 (MRSGEELDGFE) are enriched in acidic residues. The interval 1–38 (MRSGEELDGFEGEASSTSMISGASSPYQPTTEPVSQRR) is disordered. Residues 15–25 (SSTSMISGASS) are compositionally biased toward low complexity. An MARVEL domain is found at 49–176 (YLRGALGRLK…NTFLAVQKWR (128 aa)). 4 consecutive transmembrane segments (helical) span residues 59–79 (VAQVILALIAFICIETIMACS), 85–105 (YFFEFVSCSAFVVTGVLLIMF), 123–143 (LVNTGLSAFLFFIASIVLAAL), and 151–171 (IAAVIFGFLATAAYAVNTFLA). At S194 the chain carries Phosphoserine.

This sequence belongs to the chemokine-like factor family. Interacts with PD-L1/CD274 and CMTM6. As to expression, highly expressed in testis and prostate.

The protein localises to the membrane. Functionally, acts as a backup for CMTM6 to regulate plasma membrane expression of PD-L1/CD274, an immune inhibitory ligand critical for immune tolerance to self and antitumor immunity. May protect PD-L1/CD274 from being polyubiquitinated and targeted for degradation. This is CKLF-like MARVEL transmembrane domain-containing protein 4 from Homo sapiens (Human).